The sequence spans 418 residues: Gamma-glutamyl phosphate reductase (418 aa).

Basic and acidic residues predominate over residues 1 to 18 (MAIQDEMRQVAEGAREAS). Residues 1–22 (MAIQDEMRQVAEGAREASRTLS) are disordered.

The protein belongs to the gamma-glutamyl phosphate reductase family.

Its subcellular location is the cytoplasm. The enzyme catalyses L-glutamate 5-semialdehyde + phosphate + NADP(+) = L-glutamyl 5-phosphate + NADPH + H(+). It functions in the pathway amino-acid biosynthesis; L-proline biosynthesis; L-glutamate 5-semialdehyde from L-glutamate: step 2/2. Catalyzes the NADPH-dependent reduction of L-glutamate 5-phosphate into L-glutamate 5-semialdehyde and phosphate. The product spontaneously undergoes cyclization to form 1-pyrroline-5-carboxylate. The chain is Gamma-glutamyl phosphate reductase from Syntrophus aciditrophicus (strain SB).